Consider the following 432-residue polypeptide: Enolase (432 aa).

Q166 is a (2R)-2-phosphoglycerate binding site. E208 serves as the catalytic Proton donor. Residues D245, E291, and D318 each contribute to the Mg(2+) site. K343, R372, S373, and K394 together coordinate (2R)-2-phosphoglycerate. K343 serves as the catalytic Proton acceptor.

The protein belongs to the enolase family. Mg(2+) is required as a cofactor.

Its subcellular location is the cytoplasm. It localises to the secreted. The protein resides in the cell surface. It catalyses the reaction (2R)-2-phosphoglycerate = phosphoenolpyruvate + H2O. It participates in carbohydrate degradation; glycolysis; pyruvate from D-glyceraldehyde 3-phosphate: step 4/5. Catalyzes the reversible conversion of 2-phosphoglycerate (2-PG) into phosphoenolpyruvate (PEP). It is essential for the degradation of carbohydrates via glycolysis. In Leptospira borgpetersenii serovar Hardjo-bovis (strain L550), this protein is Enolase.